The following is a 3357-amino-acid chain: Versican core protein (3357 aa).

Residues 1 to 23 (MLINMKGILWMCSTLLLTHALHQ) form the signal peptide. One can recognise an Ig-like V-type domain in the interval 24 to 146 (AKMETSPPVK…EDTQDTMSLA (123 aa)). Intrachain disulfides connect Cys-44/Cys-130, Cys-172/Cys-243, Cys-196/Cys-217, Cys-270/Cys-333, and Cys-294/Cys-315. Residue Asn-57 is glycosylated (N-linked (GlcNAc...) asparagine). 2 Link domains span residues 150 to 245 (VVFH…YCYV) and 251 to 347 (DVFH…YCFK). Residues Asn-330, Asn-351, and Asn-441 are each glycosylated (N-linked (GlcNAc...) asparagine). The tract at residues 348-1308 (PKQNISEATT…IIEVRENKTG (961 aa)) is GAG-alpha (glucosaminoglycan attachment domain). The segment covering 625–634 (EPKTNGKVTE) has biased composition (basic and acidic residues). Positions 625-646 (EPKTNGKVTEDEFGQSQPTTTF) are disordered. Ser-660 carries an O-linked (Xyl...) (chondroitin sulfate) serine glycan. Disordered regions lie at residues 801–863 (WPGD…KPLE) and 881–908 (TSTS…TTST). N-linked (GlcNAc...) asparagine glycosylation is present at Asn-807. N-linked (GlcNAc...) asparagine glycosylation is found at Asn-914 and Asn-951. Disordered regions lie at residues 1010 to 1088 (SPGA…YPPG) and 1252 to 1288 (DHMT…PAAG). Polar residues-rich tracts occupy residues 1017–1042 (TGVS…SSTA) and 1275–1286 (SKTQELSTSTPA). Asn-1305 and Asn-1371 each carry an N-linked (GlcNAc...) asparagine glycan. The segment at 1309 to 3051 (RLSDMIVSGH…VEGTAVYLPG (1743 aa)) is GAG-beta. Over residues 1396-1406 (DPEAAEARRGQ) the composition is skewed to basic and acidic residues. Disordered regions lie at residues 1396 to 1421 (DPEA…DSSA) and 1458 to 1524 (TYPE…AIEQ). Composition is skewed to polar residues over residues 1411-1421 (APSQNFPDSSA) and 1487-1498 (WSESITESSPNL). O-linked (Xyl...) (chondroitin sulfate) serine glycosylation is found at Ser-1517 and Ser-1599. The tract at residues 1664–1705 (LPSPDARPTTVWNSNSTSEWVSDKSFEGRKKKENEDEEGAVN) is disordered. A compositionally biased stretch (polar residues) spans 1673–1683 (TVWNSNSTSEW). Asn-1678 carries N-linked (GlcNAc...) asparagine glycosylation. The span at 1684-1697 (VSDKSFEGRKKKEN) shows a compositional bias: basic and acidic residues. Ser-1907 and Ser-1931 each carry an O-linked (Xyl...) (chondroitin sulfate) serine glycan. The segment at 1926–1965 (VGMGGSDDERVRDTQTSSSIPTTSDNIYPVPDSKGPDSTV) is disordered. Over residues 1939–1951 (TQTSSSIPTTSDN) the composition is skewed to polar residues. N-linked (GlcNAc...) asparagine glycosylation occurs at Asn-2053. Ser-2219 and Ser-2226 each carry an O-linked (Xyl...) (chondroitin sulfate) serine glycan. Residue Asn-2243 is glycosylated (N-linked (GlcNAc...) asparagine). Positions 2308–2322 (TLSHTGTEEPTTSTL) are enriched in polar residues. Disordered regions lie at residues 2308-2374 (TLSH…ATSP) and 2475-2494 (YPTS…EGIE). Asn-2361 carries N-linked (GlcNAc...) asparagine glycosylation. Residues 2475–2486 (YPTSTLPSTEPY) are compositionally biased toward low complexity. Phosphoserine is present on residues Ser-2585 and Ser-2586. A glycan (N-linked (GlcNAc...) asparagine) is linked at Asn-2626. Residues Ser-2696, Ser-2697, and Ser-2741 are each glycosylated (O-linked (Xyl...) (chondroitin sulfate) serine). Residues 2853 to 2908 (LGGNVHRTEPPSMSRDPALDVSEDESKHKLLEELETSPTKPETSQDFPNKAKDHIP) form a disordered region. Positions 2888–2899 (TSPTKPETSQDF) are enriched in polar residues. The N-linked (GlcNAc...) asparagine glycan is linked to Asn-3029. Residues 3051–3087 (GPDLCKTNPCLNGGTCYPTETSYVCTCAPGYSGDQCE) form the EGF-like 1 domain. Cystine bridges form between Cys-3055–Cys-3066, Cys-3060–Cys-3075, Cys-3077–Cys-3086, Cys-3093–Cys-3104, Cys-3098–Cys-3113, Cys-3115–Cys-3124, Cys-3131–Cys-3142, Cys-3159–Cys-3251, Cys-3227–Cys-3243, Cys-3258–Cys-3301, and Cys-3287–Cys-3314. The region spanning 3089-3125 (DFDECHSNPCRNGATCVDGFNTFRCLCLPSYVGALCE) is the EGF-like 2; calcium-binding domain. The C-type lectin domain maps to 3138–3252 (FQGQCYKYFA…CNYHLTYTCK (115 aa)). The Sushi domain maps to 3256–3316 (VACGQPPVVE…WAMPKITCMN (61 aa)). N-linked (GlcNAc...) asparagine glycosylation is found at Asn-3331 and Asn-3341. The segment covering 3331-3342 (NSSSAKDNSINT) has biased composition (polar residues). The interval 3331–3357 (NSSSAKDNSINTSKHEHRWSRRQETRR) is disordered.

Belongs to the aggrecan/versican proteoglycan family. Interacts with FBLN1. In terms of processing, phosphorylated by FAM20C in the extracellular medium. Proteolytically cleaved by ADAMTS5 and ADAMTS15 in the pericellular matrix surrounding myoblasts, facilitating myoblast contact and fusion which is required for skeletal muscle development and regeneration. As to expression, expressed in the retina (at protein level). Isoform V2: Only expressed in brain.

Its subcellular location is the secreted. The protein resides in the extracellular space. It localises to the extracellular matrix. The protein localises to the cell projection. It is found in the cilium. Its subcellular location is the photoreceptor outer segment. The protein resides in the interphotoreceptor matrix. Its function is as follows. May play a role in intercellular signaling and in connecting cells with the extracellular matrix. May take part in the regulation of cell motility, growth and differentiation. Binds hyaluronic acid. The sequence is that of Versican core protein (Vcan) from Mus musculus (Mouse).